The chain runs to 385 residues: ATP phosphoribosyltransferase regulatory subunit (385 aa).

This sequence belongs to the class-II aminoacyl-tRNA synthetase family. HisZ subfamily. In terms of assembly, heteromultimer composed of HisG and HisZ subunits.

The protein localises to the cytoplasm. It participates in amino-acid biosynthesis; L-histidine biosynthesis; L-histidine from 5-phospho-alpha-D-ribose 1-diphosphate: step 1/9. In terms of biological role, required for the first step of histidine biosynthesis. May allow the feedback regulation of ATP phosphoribosyltransferase activity by histidine. The sequence is that of ATP phosphoribosyltransferase regulatory subunit from Bordetella pertussis (strain Tohama I / ATCC BAA-589 / NCTC 13251).